Reading from the N-terminus, the 204-residue chain is Octanoyltransferase (204 aa).

Residues 27-204 (KNTKDELWIV…LINYVSRNRH (178 aa)) enclose the BPL/LPL catalytic domain. Residues 66-73 (RGGQVTYH), 133-135 (ALG), and 146-148 (GLS) each bind substrate. Catalysis depends on C164, which acts as the Acyl-thioester intermediate.

The protein belongs to the LipB family.

The protein localises to the cytoplasm. It carries out the reaction octanoyl-[ACP] + L-lysyl-[protein] = N(6)-octanoyl-L-lysyl-[protein] + holo-[ACP] + H(+). Its pathway is protein modification; protein lipoylation via endogenous pathway; protein N(6)-(lipoyl)lysine from octanoyl-[acyl-carrier-protein]: step 1/2. Catalyzes the transfer of endogenously produced octanoic acid from octanoyl-acyl-carrier-protein onto the lipoyl domains of lipoate-dependent enzymes. Lipoyl-ACP can also act as a substrate although octanoyl-ACP is likely to be the physiological substrate. This is Octanoyltransferase from Vesicomyosocius okutanii subsp. Calyptogena okutanii (strain HA).